A 226-amino-acid chain; its full sequence is Glutathione peroxidase 3 (226 aa).

The signal sequence occupies residues 1 to 24 (MARLLQASCLLSLLLAGFLPQSRG). Selenocysteine 73 is an active-site residue. Residue selenocysteine 73 is a non-standard amino acid, selenocysteine.

It belongs to the glutathione peroxidase family. Homotetramer. As to expression, secreted in plasma.

The protein localises to the secreted. The catalysed reaction is 2 glutathione + H2O2 = glutathione disulfide + 2 H2O. It carries out the reaction tert-butyl hydroperoxide + 2 glutathione = tert-butanol + glutathione disulfide + H2O. In terms of biological role, protects cells and enzymes from oxidative damage, by catalyzing the reduction of hydrogen peroxide, lipid peroxides and organic hydroperoxide, by glutathione. The chain is Glutathione peroxidase 3 from Sapajus apella (Brown-capped capuchin).